Reading from the N-terminus, the 509-residue chain is Bifunctional purine biosynthesis protein PurH (509 aa).

Residues 1-144 (MKRALISVSD…KNYAAVTVVV (144 aa)) form the MGS-like domain.

Belongs to the PurH family.

The enzyme catalyses (6R)-10-formyltetrahydrofolate + 5-amino-1-(5-phospho-beta-D-ribosyl)imidazole-4-carboxamide = 5-formamido-1-(5-phospho-D-ribosyl)imidazole-4-carboxamide + (6S)-5,6,7,8-tetrahydrofolate. It catalyses the reaction IMP + H2O = 5-formamido-1-(5-phospho-D-ribosyl)imidazole-4-carboxamide. The protein operates within purine metabolism; IMP biosynthesis via de novo pathway; 5-formamido-1-(5-phospho-D-ribosyl)imidazole-4-carboxamide from 5-amino-1-(5-phospho-D-ribosyl)imidazole-4-carboxamide (10-formyl THF route): step 1/1. It functions in the pathway purine metabolism; IMP biosynthesis via de novo pathway; IMP from 5-formamido-1-(5-phospho-D-ribosyl)imidazole-4-carboxamide: step 1/1. The sequence is that of Bifunctional purine biosynthesis protein PurH from Listeria monocytogenes serotype 4b (strain CLIP80459).